The sequence spans 359 residues: Membrane-bound lytic murein transglycosylase C (359 aa).

Residues 1–16 (MKKYLALALIAPLLIS) form the signal peptide. Cys17 is lipidated: N-palmitoyl cysteine. Cys17 carries S-diacylglycerol cysteine lipidation.

The protein belongs to the transglycosylase Slt family.

It localises to the cell outer membrane. The catalysed reaction is Exolytic cleavage of the (1-&gt;4)-beta-glycosidic linkage between N-acetylmuramic acid (MurNAc) and N-acetylglucosamine (GlcNAc) residues in peptidoglycan, from either the reducing or the non-reducing ends of the peptidoglycan chains, with concomitant formation of a 1,6-anhydrobond in the MurNAc residue.. Murein-degrading enzyme. May play a role in recycling of muropeptides during cell elongation and/or cell division. This chain is Membrane-bound lytic murein transglycosylase C, found in Escherichia coli O81 (strain ED1a).